The sequence spans 433 residues: Trigger factor (433 aa).

The region spanning 161 to 246 is the PPIase FKBP-type domain; sequence EDRVVIDFVG…LKKVENIVLP (86 aa).

The protein belongs to the FKBP-type PPIase family. Tig subfamily.

It localises to the cytoplasm. The catalysed reaction is [protein]-peptidylproline (omega=180) = [protein]-peptidylproline (omega=0). In terms of biological role, involved in protein export. Acts as a chaperone by maintaining the newly synthesized protein in an open conformation. Functions as a peptidyl-prolyl cis-trans isomerase. This is Trigger factor from Actinobacillus pleuropneumoniae serotype 5b (strain L20).